A 510-amino-acid polypeptide reads, in one-letter code: Indoleacetate--CoA ligase (510 aa).

Belongs to the ATP-dependent AMP-binding enzyme family. As to quaternary structure, monomer.

The catalysed reaction is (indol-3-yl)acetate + ATP + CoA = (indol-3-yl)acetyl-CoA + AMP + diphosphate. It carries out the reaction (indol-3-yl)acetate + ATP + H(+) = (indol-3-yl)acetyl-AMP + diphosphate. The enzyme catalyses (indol-3-yl)acetyl-AMP + CoA = (indol-3-yl)acetyl-CoA + AMP + H(+). Its activity is regulated as follows. Inhibited by high concentrations of substrates, and by the synthetic auxin compound 2,4-dichlorophenoxyacetate (2,4-D), which does not serve as substrate. Functionally, involved in degradation of indoleacetate, the most common member of the auxin class of plant hormones. Highly specific indoleacetate-CoA ligase which catalyzes the ATP-dependent activation of indoleacetate (IAA) to indoleacetyl-CoA. Also activates some closely related compounds such as the non-physiological compound (2-naphthyl)acetate and phenylacetate, which seems to be a fortuitous substrate for IaaB. The chain is Indoleacetate--CoA ligase from Aromatoleum aromaticum (strain DSM 19018 / LMG 30748 / EbN1) (Azoarcus sp. (strain EbN1)).